Consider the following 634-residue polypeptide: UPF0329 protein ECU11_2090 (634 aa).

2 stretches are compositionally biased toward basic and acidic residues: residues 354 to 365 (REEREKREESKG) and 397 to 407 (GESKEEDRGEE). Positions 354–438 (REEREKREES…KGSGEKRISE (85 aa)) are disordered. Acidic residues predominate over residues 408–417 (GGVEAEDPLE).

Belongs to the UPF0329 family.

The sequence is that of UPF0329 protein ECU11_2090 from Encephalitozoon cuniculi (strain GB-M1) (Microsporidian parasite).